A 207-amino-acid polypeptide reads, in one-letter code: Large ribosomal subunit protein uL4 (207 aa).

The interval glutamate 56–glutamine 75 is disordered.

It belongs to the universal ribosomal protein uL4 family. Part of the 50S ribosomal subunit.

Functionally, one of the primary rRNA binding proteins, this protein initially binds near the 5'-end of the 23S rRNA. It is important during the early stages of 50S assembly. It makes multiple contacts with different domains of the 23S rRNA in the assembled 50S subunit and ribosome. Forms part of the polypeptide exit tunnel. The protein is Large ribosomal subunit protein uL4 of Rickettsia prowazekii (strain Madrid E).